A 290-amino-acid chain; its full sequence is MLSNKRGIHSASGGIDLRTLREYCLFEDFDVCMPFNPMGVPGGKGNRGSDGAIRGMLPLGDAMGDLFTAGKAGSTKMEDKERFDPYEDNSGTTICLKQGDFIVVAGDTRHSSSMVINSREMSKIFQVGDFLLTGTGFYADTHEVYVKMVYEIRQYEVDDSINIHSAANLLSKILYSKRFFPYYSFCVLSGFEKGKPYVYSYDPIGSFGSVTCVCSGSGRSMIQPLLDSFIDKKNWNNAEETQLSQEDCIRLVVKAFNSAAERDVKTKDNLEVCVMRENQVMRETFPLRRD.

It belongs to the peptidase T1B family. In terms of assembly, the 26S proteasome consists of a 20S proteasome core and two 19S regulatory subunits. The 20S proteasome core is composed of 28 subunits that are arranged in four stacked rings, resulting in a barrel-shaped structure. The two end rings are each formed by seven alpha subunits, and the two central rings are each formed by seven beta subunits. The catalytic chamber with the active sites is on the inside of the barrel.

The protein localises to the cytoplasm. It is found in the nucleus. Functionally, non-catalytic component of the proteasome which degrades poly-ubiquitinated proteins in the cytoplasm and in the nucleus. It is essential for the regulated turnover of proteins and for the removal of misfolded proteins. The proteasome is a multicatalytic proteinase complex that is characterized by its ability to cleave peptides with Arg, Phe, Tyr, Leu, and Glu adjacent to the leaving group at neutral or slightly basic pH. It has an ATP-dependent proteolytic activity. The polypeptide is Probable proteasome subunit beta type-6 (PRE7) (Encephalitozoon cuniculi (strain GB-M1) (Microsporidian parasite)).